The following is a 210-amino-acid chain: MGVRAQQKEKTRRSLVEAAFSQLSAERSFASLSLREVAREAGIAPTSFYRHFRDVDELGLTMVDESGLMLRQLMRQARQRIAKGGSVIRTSVSTFMEFIGNNPNAFRLLLRERSGTSAAFRAAVAREIQHFIAELADYLELENHMPRAFTEAQAEAMVTIVFSAGAEALDIGAEQRRQLEERLVLQLRMIAKGAYYWYRREQEKIAQHSE.

Positions 10–70 (KTRRSLVEAA…TMVDESGLML (61 aa)) constitute an HTH tetR-type domain. The H-T-H motif DNA-binding region spans 33 to 52 (SLREVAREAGIAPTSFYRHF).

Homodimer.

It localises to the cytoplasm. Represses the transcription of fabB, involved in unsaturated fatty acid (UFA) biosynthesis. By controlling UFA production, FabR directly influences the physical properties of the membrane bilayer. This is HTH-type transcriptional repressor FabR from Salmonella paratyphi A (strain ATCC 9150 / SARB42).